Consider the following 61-residue polypeptide: Small ribosomal subunit protein uS14 (61 aa).

The Zn(2+) site is built by C24, C27, C40, and C43.

This sequence belongs to the universal ribosomal protein uS14 family. Zinc-binding uS14 subfamily. As to quaternary structure, part of the 30S ribosomal subunit. Contacts proteins S3 and S10. Zn(2+) is required as a cofactor.

Binds 16S rRNA, required for the assembly of 30S particles and may also be responsible for determining the conformation of the 16S rRNA at the A site. The chain is Small ribosomal subunit protein uS14 from Ruminiclostridium cellulolyticum (strain ATCC 35319 / DSM 5812 / JCM 6584 / H10) (Clostridium cellulolyticum).